We begin with the raw amino-acid sequence, 417 residues long: Glutamate-1-semialdehyde 2,1-aminomutase (417 aa).

At Lys263 the chain carries N6-(pyridoxal phosphate)lysine.

Belongs to the class-III pyridoxal-phosphate-dependent aminotransferase family. HemL subfamily. Requires pyridoxal 5'-phosphate as cofactor.

Its subcellular location is the cytoplasm. It catalyses the reaction (S)-4-amino-5-oxopentanoate = 5-aminolevulinate. The protein operates within porphyrin-containing compound metabolism; protoporphyrin-IX biosynthesis; 5-aminolevulinate from L-glutamyl-tRNA(Glu): step 2/2. This Methanospirillum hungatei JF-1 (strain ATCC 27890 / DSM 864 / NBRC 100397 / JF-1) protein is Glutamate-1-semialdehyde 2,1-aminomutase.